A 211-amino-acid chain; its full sequence is Large ribosomal subunit protein uL3 (211 aa).

The tract at residues alanine 134 to glycine 155 is disordered. Residue glutamine 152 is modified to N5-methylglutamine.

It belongs to the universal ribosomal protein uL3 family. As to quaternary structure, part of the 50S ribosomal subunit. Forms a cluster with proteins L14 and L19. Post-translationally, methylated by PrmB.

Its function is as follows. One of the primary rRNA binding proteins, it binds directly near the 3'-end of the 23S rRNA, where it nucleates assembly of the 50S subunit. The chain is Large ribosomal subunit protein uL3 from Methylococcus capsulatus (strain ATCC 33009 / NCIMB 11132 / Bath).